A 175-amino-acid polypeptide reads, in one-letter code: Nicotinamide-nucleotide adenylyltransferase 1 (175 aa).

Belongs to the archaeal NMN adenylyltransferase family.

The protein localises to the cytoplasm. The enzyme catalyses beta-nicotinamide D-ribonucleotide + ATP + H(+) = diphosphate + NAD(+). It functions in the pathway cofactor biosynthesis; NAD(+) biosynthesis; NAD(+) from nicotinamide D-ribonucleotide: step 1/1. This chain is Nicotinamide-nucleotide adenylyltransferase 1, found in Sulfolobus acidocaldarius (strain ATCC 33909 / DSM 639 / JCM 8929 / NBRC 15157 / NCIMB 11770).